The chain runs to 243 residues: RNA-binding protein with serine-rich domain 1 homolog (243 aa).

The interval 48 to 92 (SSTRQFNNTRSPSGRSASRSSNFSHRSSSRDSFSSNRSYSSSLSR) is disordered. Low complexity predominate over residues 57 to 92 (RSPSGRSASRSSNFSHRSSSRDSFSSNRSYSSSLSR). Residues 99-177 (RTILVENLTR…EELFVSIKRF (79 aa)) enclose the RRM domain. The disordered stretch occupies residues 189-243 (YENSYRPSRSQNNSHYNDKSFHRSRYSRARSRSPGSNISEYSDQSPPYHSYRHRP). The segment covering 193-203 (YRPSRSQNNSH) has biased composition (polar residues). The span at 210-219 (HRSRYSRARS) shows a compositional bias: basic residues. Residues 222-235 (PGSNISEYSDQSPP) are compositionally biased toward polar residues.

The protein belongs to the splicing factor SR family. In terms of assembly, component of the active spliceosome.

It is found in the cytoplasm. The protein localises to the nucleus. Its function is as follows. Putative component of the spliceosome which enhances the formation of the ATP-dependent A complex of the spliceosome. may participate in mRNA 3'-end cleavage. Also mediates increase of mRNA abundance and translational efficiency. The protein is RNA-binding protein with serine-rich domain 1 homolog of Schizosaccharomyces pombe (strain 972 / ATCC 24843) (Fission yeast).